Reading from the N-terminus, the 104-residue chain is Complex III assembly factor LYRM7 (104 aa).

At serine 60 the chain carries Phosphoserine.

It belongs to the complex I LYR family. As to quaternary structure, interacts with UQCRFS1.

The protein localises to the mitochondrion matrix. In terms of biological role, assembly factor required for Rieske Fe-S protein UQCRFS1 incorporation into the cytochrome b-c1 (CIII) complex. Functions as a chaperone, binding to this subunit within the mitochondrial matrix and stabilizing it prior to its translocation and insertion into the late CIII dimeric intermediate within the mitochondrial inner membrane. This chain is Complex III assembly factor LYRM7 (LYRM7), found in Pongo abelii (Sumatran orangutan).